The primary structure comprises 90 residues: Acylphosphatase (90 aa).

Positions 3–90 (KKQFVVYGIV…HSFGLFSVEH (88 aa)) constitute an Acylphosphatase-like domain. Active-site residues include arginine 18 and asparagine 36.

This sequence belongs to the acylphosphatase family.

It carries out the reaction an acyl phosphate + H2O = a carboxylate + phosphate + H(+). The chain is Acylphosphatase (acyP) from Mannheimia succiniciproducens (strain KCTC 0769BP / MBEL55E).